The chain runs to 128 residues: KRAB domain-containing protein 1 (128 aa).

Residues 15-86 (VAFEDVAVYF…QPQGVLSRND (72 aa)) enclose the KRAB domain.

The protein is KRAB domain-containing protein 1 (KRBOX1) of Homo sapiens (Human).